The primary structure comprises 300 residues: uncharacterized protein (300 aa).

Transmembrane regions (helical) follow at residues 13–35 (LLCI…LQPL), 45–67 (MLTM…SLLS), 80–102 (WVLF…WAPL), 106–128 (GINI…WAWL), 180–202 (IPAL…IYIL), 217–236 (YWLL…SANL), 243–265 (PVSI…AVFV), and 275–294 (YFTY…EGLL).

The protein belongs to the EamA transporter family.

Its subcellular location is the cell membrane. This is an uncharacterized protein from Haemophilus influenzae (strain ATCC 51907 / DSM 11121 / KW20 / Rd).